Reading from the N-terminus, the 410-residue chain is Regulator of microtubule dynamics protein 2 (410 aa).

Residues 9-28 (LILGIMAGTAGISLLAFWYH) traverse the membrane as a helical segment. Ser51 is modified (phosphoserine). Residues 69–110 (QRRQLQILEKLNELLTNMEELKEEIRFLKETIPKLEECIQDE) adopt a coiled-coil conformation. The disordered stretch occupies residues 120-151 (ISPQHRARKKKGTTVQRSATSNSSEEAESEGG). Phosphoserine is present on Ser121. Basic residues predominate over residues 121 to 131 (SPQHRARKKKG). Residue Thr139 is modified to Phosphothreonine. Tyr152 carries the post-translational modification Phosphotyrosine. Phosphothreonine occurs at positions 154 and 157.

The protein belongs to the RMDN family. In terms of assembly, interacts with microtubules.

It localises to the membrane. It is found in the cytoplasm. The protein localises to the cytoskeleton. The protein resides in the spindle. Its subcellular location is the spindle pole. The chain is Regulator of microtubule dynamics protein 2 (Rmdn2) from Mus musculus (Mouse).